A 321-amino-acid polypeptide reads, in one-letter code: Mas-related G-protein coupled receptor member D (321 aa).

The Extracellular segment spans residues 1–33; it reads MNQTLNSSGTVESALNYSRGSTVHTAYLVLSSL. Asn-2, Asn-6, and Asn-16 each carry an N-linked (GlcNAc...) asparagine glycan. A helical membrane pass occupies residues 34–54; the sequence is AMFTCLCGMAGNSMVIWLLGF. Topologically, residues 55–59 are cytoplasmic; it reads RMHRN. The chain crosses the membrane as a helical span at residues 60–80; sequence PFCIYILNLAAADLLFLFSMA. The Extracellular portion of the chain corresponds to 81–112; the sequence is STLSLETQPLVNTTDKVHELMKRLMYFAYTVG. Asn-92 carries an N-linked (GlcNAc...) asparagine glycan. The chain crosses the membrane as a helical span at residues 113 to 133; the sequence is LSLLTAISTQRCLSVLFPIWF. Residues 134–142 lie on the Cytoplasmic side of the membrane; it reads KCHRPRHLS. The chain crosses the membrane as a helical span at residues 143 to 163; the sequence is AWVCGLLWTLCLLMNGLTSSF. Topologically, residues 164-184 are extracellular; the sequence is CSKFLKFNEDRCFRVDMVQAA. A helical membrane pass occupies residues 185-205; that stretch reads LIMGVLTPVMTLSSLTLFVWV. Residues 206–218 lie on the Cytoplasmic side of the membrane; that stretch reads RRSSQQWRRQPTR. Residues 219-239 traverse the membrane as a helical segment; sequence LFVVVLASVLVFLICSLPLSI. Topologically, residues 240–257 are extracellular; the sequence is YWFVLYWLSLPPEMQVLC. The helical transmembrane segment at 258-280 threads the bilayer; that stretch reads FSLSRLSSSVSSSANPVIYFLVG. Topologically, residues 281–321 are cytoplasmic; that stretch reads SRRSHRLPTRSLGTVLQQALREEPELEGGETPTVGTNEMGA. Positions 302–321 are disordered; it reads EEPELEGGETPTVGTNEMGA.

It belongs to the G-protein coupled receptor 1 family. Mas subfamily.

The protein resides in the cell membrane. Functionally, may regulate nociceptor function and/or development, including the sensation or modulation of pain. Functions as a specific membrane receptor for beta-alanine. Beta-alanine at micromolar doses specifically evoked Ca(2+) influx in cells expressing the receptor. Beta-alanine decreases forskolin-stimulated cAMP production in cells expressing the receptor, suggesting that the receptor couples with G-protein G(q) and G(i). The sequence is that of Mas-related G-protein coupled receptor member D (MRGPRD) from Homo sapiens (Human).